Here is a 207-residue protein sequence, read N- to C-terminus: Proteasome subunit beta 2 (207 aa).

Positions 1–10 (MLQLTEKFKG) are cleaved as a propeptide — removed in mature form; by autocatalysis. Residue T11 is the Nucleophile of the active site.

It belongs to the peptidase T1B family. In terms of assembly, the 20S proteasome core is composed of 14 alpha and 14 beta subunits that assemble into four stacked heptameric rings, resulting in a barrel-shaped structure. The two inner rings, each composed of seven catalytic beta subunits, are sandwiched by two outer rings, each composed of seven alpha subunits. The catalytic chamber with the active sites is on the inside of the barrel. Has a gated structure, the ends of the cylinder being occluded by the N-termini of the alpha-subunits. Is capped at one or both ends by the proteasome regulatory ATPase, PAN.

The protein localises to the cytoplasm. The catalysed reaction is Cleavage of peptide bonds with very broad specificity.. Its activity is regulated as follows. The formation of the proteasomal ATPase PAN-20S proteasome complex, via the docking of the C-termini of PAN into the intersubunit pockets in the alpha-rings, triggers opening of the gate for substrate entry. Interconversion between the open-gate and close-gate conformations leads to a dynamic regulation of the 20S proteasome proteolysis activity. In terms of biological role, component of the proteasome core, a large protease complex with broad specificity involved in protein degradation. The sequence is that of Proteasome subunit beta 2 from Pyrococcus abyssi (strain GE5 / Orsay).